Reading from the N-terminus, the 333-residue chain is EP300-interacting inhibitor of differentiation 3 (333 aa).

Belongs to the NSE4 family. In terms of assembly, component of the SMC5-SMC6 complex which consists at least of SMC5, SMC6, NSMCE2, NSMCE1, NSMCE4A or EID3 and NSMCE3; EID3 seems to be a testis-specific subunit. NSMCE1, NSMCE4A or EID3 and NSMCE3 probably form a subcomplex that bridges the head domains of the SMC5:SMC6 heterodimer. Homodimer, and heterodimer with EID2. Interacts with the C-terminal region of CREBBP. In terms of tissue distribution, highly expressed in testis.

The protein localises to the nucleus. Its subcellular location is the cytoplasm. It localises to the chromosome. It is found in the telomere. Its function is as follows. Tissue-specific component of the SMC5-SMC6 complex, a complex involved in repair of DNA double-strand breaks by homologous recombination. The complex may promote sister chromatid homologous recombination by recruiting the SMC1-SMC3 cohesin complex to double-strand breaks. The complex is required for telomere maintenance via recombination and mediates sumoylation of shelterin complex (telosome) components. Functionally, acts as a repressor of nuclear receptor-dependent transcription possibly by interfering with CREBBP-dependent coactivation. May function as a coinhibitor of other CREBBP/EP300-dependent transcription factors. In Homo sapiens (Human), this protein is EP300-interacting inhibitor of differentiation 3.